The primary structure comprises 361 residues: sn-glycerol-3-phosphate import ATP-binding protein UgpC (361 aa).

The ABC transporter domain occupies 4-235 (LSLKGVRKSY…PATVFVAGFI (232 aa)). Residue 37–44 (GPSGCGKS) coordinates ATP.

This sequence belongs to the ABC transporter superfamily. sn-glycerol-3-phosphate importer (TC 3.A.1.1.3) family. The complex is composed of two ATP-binding proteins (UgpC), two transmembrane proteins (UgpA and UgpE) and a solute-binding protein (UgpB).

The protein localises to the cell inner membrane. The catalysed reaction is sn-glycerol 3-phosphate(out) + ATP + H2O = sn-glycerol 3-phosphate(in) + ADP + phosphate + H(+). Its function is as follows. Part of the ABC transporter complex UgpBAEC involved in sn-glycerol-3-phosphate (G3P) import. Responsible for energy coupling to the transport system. This chain is sn-glycerol-3-phosphate import ATP-binding protein UgpC, found in Burkholderia cenocepacia (strain HI2424).